Reading from the N-terminus, the 777-residue chain is Acyl-homoserine lactone acylase PvdQ (777 aa).

An N-terminal signal peptide occupies residues 1 to 25 (MIISRQLPSFCLAALFLSFSGGAHA). The propeptide at 196-218 (AGLPAEHWQLAAARQQRFALDRG) is spacer peptide. Serine 219 serves as the catalytic Nucleophile.

It belongs to the peptidase S45 family. As to quaternary structure, heterodimer of an alpha subunit and a beta subunit processed from the same precursor.

It localises to the periplasm. It catalyses the reaction an N-acyl-L-homoserine lactone + H2O = L-homoserine lactone + a carboxylate. Functionally, catalyzes the deacylation of acyl-homoserine lactone (AHL or acyl-HSL), releasing homoserine lactone (HSL) and the corresponding fatty acid. Possesses a specificity for the degradation of long-chain acyl-HSLs (side chains of 11 to 14 carbons in length). This chain is Acyl-homoserine lactone acylase PvdQ (pvdQ), found in Pseudomonas fluorescens (strain ATCC BAA-477 / NRRL B-23932 / Pf-5).